The following is a 473-amino-acid chain: Sphingosine kinase 1 (473 aa).

The DAGKc domain maps to 83 to 233 (QCRGNLLVFI…VALYSVKTDN (151 aa)). Residues 93–95 (NPN) and 125–129 (TTGPN) each bind ATP. 151–154 (SGDG) lines the substrate pocket. The Proton donor/acceptor role is filled by D153. ATP contacts are provided by residues E158 and 184–186 (GSG). D251 is a substrate binding site. ATP contacts are provided by residues R258, R265, and 448–450 (DGE).

The cofactor is Mg(2+). As to expression, expressed in the majority of cholinergic and GABAergic neurons, body wall muscle, excretory canal cells, intestine, and hypodermis.

The protein localises to the presynaptic cell membrane. It is found in the cell projection. It localises to the axon. Its subcellular location is the perikaryon. The protein resides in the mitochondrion membrane. It carries out the reaction a sphingoid base + ATP = a sphingoid 1-phosphate + ADP + H(+). It catalyses the reaction 15-methylhexadecasphing-4-enine + ATP = 15-methylhexadecasphing-4-enine 1-phosphate + ADP + H(+). The catalysed reaction is 15-methylhexadecasphinganine + ATP = 15-methylhexadecasphinganine 1-phosphate + ADP + H(+). It functions in the pathway lipid metabolism; sphingolipid metabolism. Catalyzes the phosphorylation of sphingoid bases to form sphingoid 1-phosphate (SPP), which have both intra- and extracellular functions. C.elegans contain specific sphingoid bases, which are unique or different in structure compared to the sphingoid bases found in other animals. Two examples of these distinctive compounds are: 15-methylhexadecasphinganine and 15-methylhexadecasphing-4-enine. Required for neurotransmitter release from neuromuscular junctions. Acts by recruiting the synaptic vesicle priming protein unc-13 to synapses. This is Sphingosine kinase 1 (sphk-1) from Caenorhabditis elegans.